Consider the following 304-residue polypeptide: m7GpppX diphosphatase (304 aa).

Residues E152, K174, and 235–246 each bind substrate; that span reads HYLPSYYHLHVH. A Histidine triad motif motif is present at residues 242-246; sequence HLHVH. H244 acts as the Nucleophile in catalysis.

The protein belongs to the HIT family.

The protein resides in the cytoplasm. It is found in the nucleus. It carries out the reaction a 5'-end (N(7)-methyl 5'-triphosphoguanosine)-ribonucleoside in mRNA + H2O = N(7)-methyl-GMP + a 5'-end diphospho-ribonucleoside in mRNA + 2 H(+). Decapping scavenger enzyme that catalyzes the cleavage of a residual cap structure following the degradation of mRNAs by the 3'-&gt;5' exosome-mediated mRNA decay pathway. Hydrolyzes cap analog structures like 7-methylguanosine nucleoside triphosphate (m7GpppG) with up to 10 nucleotide substrates (small capped oligoribonucleotides) and specifically releases 5'-phosphorylated RNA fragments and 7-methylguanosine monophosphate (m7GMP). Has no activity towards mRNA molecules longer than 25 nucleotides. May also play a role in the 5'-&gt;3 mRNA decay pathway; m7GDP, the downstream product released by the 5'-&gt;3' mRNA mediated decapping activity, may be also converted by DCS1 to m7GMP. Inhibits mRNA translation. Binds to the m7GpppG cap analog. This chain is m7GpppX diphosphatase (nhm1), found in Schizosaccharomyces pombe (strain 972 / ATCC 24843) (Fission yeast).